Reading from the N-terminus, the 83-residue chain is Cobrotoxin homolog (83 aa).

The N-terminal stretch at 1–21 is a signal peptide; the sequence is METLLLTLLVVTIVCLDLGYT. 4 disulfide bridges follow: C24–C45, C38–C62, C64–C75, and C76–C81.

It belongs to the three-finger toxin family. Short-chain subfamily. Type I alpha-neurotoxin sub-subfamily. Expressed by the venom gland.

The protein localises to the secreted. Its function is as follows. Binds to muscle nicotinic acetylcholine receptor (nAChR) and inhibit acetylcholine from binding to the receptor, thereby impairing neuromuscular transmission. The sequence is that of Cobrotoxin homolog from Naja naja (Indian cobra).